Here is a 271-residue protein sequence, read N- to C-terminus: Putative carboxymethylenebutenolidase (271 aa).

Residues cysteine 147, aspartate 204, and histidine 236 contribute to the active site.

The protein belongs to the dienelactone hydrolase family.

The enzyme catalyses 2-(5-oxo-2,5-dihydrofuran-2-ylidene)acetate + H2O = 4-oxohex-2-enedioate + H(+). This chain is Putative carboxymethylenebutenolidase (ysgA), found in Escherichia coli O157:H7.